A 475-amino-acid chain; its full sequence is Kynureninase (475 aa).

Pyridoxal 5'-phosphate-binding positions include Leu141, Thr142, 169-172 (FPSD), Asp254, His257, and Tyr279. The residue at position 280 (Lys280) is an N6-(pyridoxal phosphate)lysine. Trp319 and Asn347 together coordinate pyridoxal 5'-phosphate.

Belongs to the kynureninase family. As to quaternary structure, homodimer. It depends on pyridoxal 5'-phosphate as a cofactor.

Its subcellular location is the cytoplasm. It carries out the reaction L-kynurenine + H2O = anthranilate + L-alanine + H(+). The catalysed reaction is 3-hydroxy-L-kynurenine + H2O = 3-hydroxyanthranilate + L-alanine + H(+). It participates in amino-acid degradation; L-kynurenine degradation; L-alanine and anthranilate from L-kynurenine: step 1/1. The protein operates within cofactor biosynthesis; NAD(+) biosynthesis; quinolinate from L-kynurenine: step 2/3. In terms of biological role, catalyzes the cleavage of L-kynurenine (L-Kyn) and L-3-hydroxykynurenine (L-3OHKyn) into anthranilic acid (AA) and 3-hydroxyanthranilic acid (3-OHAA), respectively. In Sclerotinia sclerotiorum (strain ATCC 18683 / 1980 / Ss-1) (White mold), this protein is Kynureninase (bna5).